A 147-amino-acid polypeptide reads, in one-letter code: MKVIFLKDVPGQGKKNEIKEVSDGYARNYLLPNQLVKIATNNSVKTLKEHLKADQEEKELAKAQTKQIKKTLEELTLHFKLQTNDDKVFGSISSQDIVNQLKDLHRIELDKKKFIRFKNINKIGINYIKVKLDFGIEAIIKVDVKEV.

Belongs to the bacterial ribosomal protein bL9 family.

In terms of biological role, binds to the 23S rRNA. The sequence is that of Large ribosomal subunit protein bL9 from Mycoplasma capricolum subsp. capricolum (strain California kid / ATCC 27343 / NCTC 10154).